Here is a 520-residue protein sequence, read N- to C-terminus: Anthranilate synthase component 1 (520 aa).

L-tryptophan-binding positions include Ser-40 and 291-293 (PYM). 328 to 329 (GT) lines the chorismate pocket. Glu-361 provides a ligand contact to Mg(2+). Residues Tyr-449, Arg-469, 483–485 (GAG), and Gly-485 contribute to the chorismate site. Mg(2+) is bound at residue Glu-498.

Belongs to the anthranilate synthase component I family. In terms of assembly, heterotetramer consisting of two non-identical subunits: a beta subunit (TrpG) and a large lpha subunit (TrpE). Requires Mg(2+) as cofactor.

It catalyses the reaction chorismate + L-glutamine = anthranilate + pyruvate + L-glutamate + H(+). It functions in the pathway amino-acid biosynthesis; L-tryptophan biosynthesis; L-tryptophan from chorismate: step 1/5. With respect to regulation, cooperatively feedback inhibited by tryptophan. Its function is as follows. Part of a heterotetrameric complex that catalyzes the two-step biosynthesis of anthranilate, an intermediate in the biosynthesis of L-tryptophan. In the first step, the glutamine-binding beta subunit (TrpG) of anthranilate synthase (AS) provides the glutamine amidotransferase activity which generates ammonia as a substrate that, along with chorismate, is used in the second step, catalyzed by the large alpha subunit of AS (TrpE) to produce anthranilate. In the absence of TrpG, TrpE can synthesize anthranilate directly from chorismate and high concentrations of ammonia. The protein is Anthranilate synthase component 1 (trpE) of Escherichia coli (strain K12).